Reading from the N-terminus, the 316-residue chain is Ribosomal RNA small subunit methyltransferase H (316 aa).

S-adenosyl-L-methionine is bound by residues 35-37, aspartate 55, phenylalanine 84, aspartate 105, and glutamine 112; that span reads AGH.

This sequence belongs to the methyltransferase superfamily. RsmH family.

It is found in the cytoplasm. The catalysed reaction is cytidine(1402) in 16S rRNA + S-adenosyl-L-methionine = N(4)-methylcytidine(1402) in 16S rRNA + S-adenosyl-L-homocysteine + H(+). In terms of biological role, specifically methylates the N4 position of cytidine in position 1402 (C1402) of 16S rRNA. The protein is Ribosomal RNA small subunit methyltransferase H of Streptococcus sanguinis (strain SK36).